We begin with the raw amino-acid sequence, 118 residues long: D-dopachrome decarboxylase-B (118 aa).

Pro-2 carries the N-acetylproline modification.

It belongs to the MIF family. Homotrimer.

The protein resides in the cytoplasm. The enzyme catalyses D-dopachrome + H(+) = 5,6-dihydroxyindole + CO2. Its function is as follows. Tautomerization of D-dopachrome with decarboxylation to give 5,6-dihydroxyindole (DHI). This is D-dopachrome decarboxylase-B (ddt-b) from Xenopus laevis (African clawed frog).